A 186-amino-acid polypeptide reads, in one-letter code: Peptidyl-tRNA hydrolase (186 aa).

Tyr-14 provides a ligand contact to tRNA. The active-site Proton acceptor is His-19. 3 residues coordinate tRNA: Phe-64, Asn-66, and Asn-112.

This sequence belongs to the PTH family. Monomer.

The protein localises to the cytoplasm. The enzyme catalyses an N-acyl-L-alpha-aminoacyl-tRNA + H2O = an N-acyl-L-amino acid + a tRNA + H(+). Hydrolyzes ribosome-free peptidyl-tRNAs (with 1 or more amino acids incorporated), which drop off the ribosome during protein synthesis, or as a result of ribosome stalling. In terms of biological role, catalyzes the release of premature peptidyl moieties from peptidyl-tRNA molecules trapped in stalled 50S ribosomal subunits, and thus maintains levels of free tRNAs and 50S ribosomes. The sequence is that of Peptidyl-tRNA hydrolase from Listeria monocytogenes serotype 4b (strain CLIP80459).